Reading from the N-terminus, the 505-residue chain is 4-trimethylaminobutyraldehyde dehydrogenase (505 aa).

Residues Lys-191 and 243-247 (GSVPT) each bind NAD(+). The active-site Proton acceptor is the Glu-265. Cys-299 acts as the Nucleophile in catalysis. Residue Glu-402 coordinates NAD(+).

Belongs to the aldehyde dehydrogenase family. Homotetramer. As to expression, constitutively expressed in all organs tested: brain, eye, gill, GI, heart, liver, kidney, muscle, skin, testis and ovary.

It is found in the cytoplasm. The protein resides in the cytosol. The catalysed reaction is 4-(trimethylamino)butanal + NAD(+) + H2O = 4-(trimethylamino)butanoate + NADH + 2 H(+). It carries out the reaction an aldehyde + NAD(+) + H2O = a carboxylate + NADH + 2 H(+). The protein operates within amine and polyamine biosynthesis; carnitine biosynthesis. Its function is as follows. Converts gamma-trimethylaminobutyraldehyde into gamma-butyrobetaine with high efficiency (in vitro). Can catalyze the irreversible oxidation of a broad range of aldehydes to the corresponding acids in an NAD-dependent reaction, but with low efficiency. This is 4-trimethylaminobutyraldehyde dehydrogenase (aldh9A1) from Oryzias latipes (Japanese rice fish).